Here is a 115-residue protein sequence, read N- to C-terminus: Probable K(+)/H(+) antiporter subunit C (115 aa).

3 consecutive transmembrane segments (helical) span residues 4–21 (ILSA…YLLL), 28–47 (VIIG…FGMG), and 75–97 (ALVL…VLLA).

Belongs to the CPA3 antiporters (TC 2.A.63) subunit C family. As to quaternary structure, may form a hetero-oligomeric complex that consists of six subunits: PhaAB, PhaC, PhaD, PhaE, PhaF and PhaG.

It localises to the cell membrane. Part of a K(+) efflux system which is required for the adaptation of R.meliloti to alkaline pH as well as for the infection process during symbiotic nodule development. In Rhizobium meliloti (strain 1021) (Ensifer meliloti), this protein is Probable K(+)/H(+) antiporter subunit C (phaC).